The primary structure comprises 685 residues: Methionine--tRNA ligase (685 aa).

Residues 12–22 (PYANGSIHLGH) carry the 'HIGH' region motif. The Zn(2+) site is built by Cys-143, Cys-146, Cys-156, and Cys-159. The 'KMSKS' region motif lies at 339 to 343 (KMSKS). Lys-342 provides a ligand contact to ATP. Positions 582-685 (DFMKIDMRVA…TGAQPGDKVG (104 aa)) constitute a tRNA-binding domain.

The protein belongs to the class-I aminoacyl-tRNA synthetase family. MetG type 1 subfamily. As to quaternary structure, homodimer. Zn(2+) is required as a cofactor.

Its subcellular location is the cytoplasm. It carries out the reaction tRNA(Met) + L-methionine + ATP = L-methionyl-tRNA(Met) + AMP + diphosphate. Functionally, is required not only for elongation of protein synthesis but also for the initiation of all mRNA translation through initiator tRNA(fMet) aminoacylation. This chain is Methionine--tRNA ligase, found in Neisseria meningitidis serogroup B (strain ATCC BAA-335 / MC58).